A 328-amino-acid chain; its full sequence is Surface antigen CRP170 (328 aa).

2 consecutive repeats follow at residues 38 to 102 and 103 to 167; these read NAPC…CKKC.

The protein is Surface antigen CRP170 of Giardia intestinalis (Giardia lamblia).